The chain runs to 147 residues: Hemoglobin subunit epsilon (147 aa).

Residues 3-147 (HFTAEEKTAI…VASALAHKYH (145 aa)) enclose the Globin domain. A phosphoserine mark is found at S14 and S51. The heme b site is built by H64 and H93.

This sequence belongs to the globin family. In terms of tissue distribution, red blood cells.

Functionally, hemoglobin epsilon chain is an embryonic-type beta-type chain found in prenatal and neonatal marsupials. This Notamacropus eugenii (Tammar wallaby) protein is Hemoglobin subunit epsilon (HBE1).